Here is a 987-residue protein sequence, read N- to C-terminus: UPF0182 protein Lxx09300 (987 aa).

Transmembrane regions (helical) follow at residues 17–37, 59–79, 108–128, 167–187, 206–226, 256–276, and 283–303; these read VWTTLGVIVALVILFFIFAGL, AAIAMFFVGFLGMALPLWVVI, RLAMYGIPIVFGIFAGVSAAS, VGFASAVVLISLLATLATCYL, VQISVIAAVYLLLQGVSVWLD, AVLAVAAVFVALLFAVTAFTG, and VGTALLIVAALVIGAIYPWAI. Disordered regions lie at residues 700 to 719 and 886 to 947; these read RDDAWTTPNDPTSSPTDPTL and TAGD…ALQQ. Over residues 705 to 719 the composition is skewed to low complexity; it reads TTPNDPTSSPTDPTL. Over residues 897–932 the composition is skewed to gly residues; that stretch reads GGSGGGSSGDAGSSAGGGSSGGGGSSAGGSSSGSGS. Positions 933 to 947 are enriched in low complexity; it reads SGTQSNAALQRALQQ.

This sequence belongs to the UPF0182 family.

Its subcellular location is the cell membrane. In Leifsonia xyli subsp. xyli (strain CTCB07), this protein is UPF0182 protein Lxx09300.